The sequence spans 256 residues: H-2 class II histocompatibility antigen, A-K alpha chain (256 aa).

Residues 1 to 23 (MPRSRALILGVLALTTMLSLCGG) form the signal peptide. Positions 24–111 (EDDIEADHVG…KRSNSTPATN (88 aa)) are alpha-1. The Extracellular segment spans residues 24-218 (EDDIEADHVG…IPAPMSELTE (195 aa)). 2 N-linked (GlcNAc...) asparagine glycosylation sites follow: N105 and N145. The interval 112-205 (EAPQATVFPK…GLEEPVLKHW (94 aa)) is alpha-2. The region spanning 114 to 206 (PQATVFPKSP…LEEPVLKHWE (93 aa)) is the Ig-like C1-type domain. A disulfide bridge connects residues C134 and C190. The segment at 206–218 (EPEIPAPMSELTE) is connecting peptide. A helical membrane pass occupies residues 219-241 (TVVCALGLSVGLVGIVVGTIFII). The Cytoplasmic segment spans residues 242 to 256 (QGLRSGGTSRHPGPL).

Belongs to the MHC class II family.

The protein localises to the membrane. The sequence is that of H-2 class II histocompatibility antigen, A-K alpha chain (H2-Aa) from Mus musculus (Mouse).